Consider the following 593-residue polypeptide: Methionine--tRNA ligase (593 aa).

The 'HIGH' region signature appears at 7–17; the sequence is PYANGPRHIGH. Residues Cys-139, Cys-142, Cys-152, and Cys-155 each coordinate Zn(2+). The 'KMSKS' region motif lies at 343 to 347; it reads KFSTS. Thr-346 contributes to the ATP binding site.

Belongs to the class-I aminoacyl-tRNA synthetase family. MetG type 1 subfamily. In terms of assembly, monomer. The cofactor is Zn(2+).

It localises to the cytoplasm. It catalyses the reaction tRNA(Met) + L-methionine + ATP = L-methionyl-tRNA(Met) + AMP + diphosphate. Is required not only for elongation of protein synthesis but also for the initiation of all mRNA translation through initiator tRNA(fMet) aminoacylation. In Saccharopolyspora erythraea (strain ATCC 11635 / DSM 40517 / JCM 4748 / NBRC 13426 / NCIMB 8594 / NRRL 2338), this protein is Methionine--tRNA ligase.